Consider the following 180-residue polypeptide: Succinate dehydrogenase cytochrome B subunit, mitochondrial (180 aa).

Residues 1–82 (MFATRSFCLS…WYLSSLHRIT (82 aa)) are Mitochondrial matrix-facing. Residues 83 to 103 (GCVVAGTLYAFAMGYLVAPLA) form a helical membrane-spanning segment. At 104 to 122 (GYSLDTATISGLIQQVPTW) the chain is on the mitochondrial intermembrane side. A helical membrane pass occupies residues 123 to 143 (IKVPAKFVISYPLTFHIFNGI). Heme is bound at residue histidine 138. At 144–159 (RHLIWDTTKELSLKGV) the chain is on the mitochondrial matrix side. The chain crosses the membrane as a helical span at residues 160 to 180 (YRTGYAVLALSVLTSGYFAMI).

This sequence belongs to the cytochrome b560 family. As to quaternary structure, forms part of complex II containing four subunits: a 70 kDa flavoprotein (FP), a 27 kDa iron-sulfur protein (IP), a cytochrome B and a membrane-anchoring protein. Heme is required as a cofactor.

It is found in the mitochondrion inner membrane. The protein operates within carbohydrate metabolism; tricarboxylic acid cycle. Functionally, membrane-anchoring subunit of succinate dehydrogenase (SDH) that is involved in complex II of the mitochondrial electron transport chain and is responsible for transferring electrons from succinate to ubiquinone (coenzyme Q). This is Succinate dehydrogenase cytochrome B subunit, mitochondrial (sdh3) from Schizosaccharomyces pombe (strain 972 / ATCC 24843) (Fission yeast).